The primary structure comprises 84 residues: UPF0457 protein BALH_2270 (84 aa).

This sequence belongs to the UPF0457 family.

This Bacillus thuringiensis (strain Al Hakam) protein is UPF0457 protein BALH_2270.